The following is a 287-amino-acid chain: 5'-3' exonuclease (287 aa).

Residues 172 to 270 enclose the 5'-3' exonuclease domain; sequence IYPKEFIDLL…ITSEEITLKK (99 aa).

Its function is as follows. 5'-3' exonuclease acting preferentially on double-stranded DNA. The sequence is that of 5'-3' exonuclease (pol) from Buchnera aphidicola subsp. Schizaphis graminum (strain Sg).